A 598-amino-acid chain; its full sequence is Nuclear receptor subfamily 4immunitygroup A member 1 (598 aa).

Disordered stretches follow at residues 1–44 (MPCI…EAAP), 131–158 (YYGS…DGSF), 177–206 (LPKA…AQSP), and 221–265 (GESY…GSEG). Residues 134–145 (SPCSAPSPSTPS) are compositionally biased toward low complexity. The required for nuclear import stretch occupies residues 171–466 (RAWTEQLPKA…PGEGKLIFCS (296 aa)). A DNA-binding region (nuclear receptor) is located at residues 264 to 339 (EGRCAVCGDN…VGMVKEVVRT (76 aa)). 2 consecutive NR C4-type zinc fingers follow at residues 267–287 (CAVC…CEGC) and 303–327 (CLAN…FQKC). A required for binding NBRE-containing DNA region spans residues 268–354 (AVCGDNASCQ…RRGRLPSKPK (87 aa)). The segment at 299-361 (AKYICLANKD…KPKQPPDASP (63 aa)) is required for the interaction with RXRA. S341 is subject to Phosphoserine; by PKA. The interval 341–361 (SLKGRRGRLPSKPKQPPDASP) is disordered. S351 carries the phosphoserine modification. Positions 360–595 (SPANLLTSLV…PIIDKIFMDT (236 aa)) constitute an NR LBD domain. A binds lipopolysaccharide region spans residues 521 to 544 (PRRVEELQNRIASCLKEHVAAVAG). Residues 584-595 (PPPIIDKIFMDT) are AF-2.

Belongs to the nuclear hormone receptor family. NR4 subfamily. Binds the NGFI-B response element (NBRE) as a monomer. Binds the Nur response element (NurRE), consisting of two inverse NBRE-related octanucleotide repeats separated by 6 base-pairs, as a dimer. Interacts (via N-terminus) with NLRP3 (via LRR repeat domain); the interaction is direct, requires binding of NR4A1/Nur77 to NBRE-containing dsDNA and lipopolysaccharide, and leads to non-canonical NLRP3 inflammasome activation. Interacts with GADD45GIP1. Interacts with STK11. Interacts with IFI27. Heterodimer (via DNA-binding domain) with RXRA (via C-terminus); DNA-binding of the heterodimer is enhanced by 9-cis retinoic acid. Competes for the RXRA interaction with EP300 and thereby attenuates EP300 mediated acetylation of RXRA. Interacts with NCOA1. Interacts with NCOA2. Interacts with NCOA3. The cofactor is Zn(2+). In terms of processing, phosphorylated at Ser-351 by RPS6KA1 and RPS6KA3 in response to mitogenic or stress stimuli. Post-translationally, acetylated by p300/CBP, acetylation increases stability. Deacetylated by HDAC1. In terms of tissue distribution, fetal muscle and adult liver, brain and thyroid.

The protein localises to the nucleus. Its subcellular location is the cytoplasm. The protein resides in the cytosol. It localises to the mitochondrion. Its activity is regulated as follows. Its transcription factor activity is activated by binding cytosporone B (Csn-B) via its ligand-binding (NR LBD) domain and stimulates recruitment of coactivators NCOA1 and NCOA2, but not NCOA3, to promoters. Csn-B-binding is also accompanied by its translocation to the mitochondrion. Its transcription factor activity is activated by corticotropin-releasing hormone (CRH) and forskolin. Not activated by binding cytosporone C (Csn-C). Functionally, orphan nuclear receptor. Binds the NGFI-B response element (NBRE) 5'-AAAGGTCA-3'. Binds 9-cis-retinoic acid outside of its ligand-binding (NR LBD) domain. Participates in energy homeostasis by sequestrating the kinase STK11 in the nucleus, thereby attenuating cytoplasmic AMPK activation. Regulates the inflammatory response in macrophages by regulating metabolic adaptations during inflammation, including repressing the transcription of genes involved in the citric acid cycle (TCA). Inhibits NF-kappa-B signaling by binding to low-affinity NF-kappa-B binding sites, such as at the IL2 promoter. May act concomitantly with NR4A2 in regulating the expression of delayed-early genes during liver regeneration. Plays a role in the vascular response to injury. In terms of biological role, in the cytosol, upon its detection of both bacterial lipopolysaccharide (LPS) and NBRE-containing mitochondrial DNA released by GSDMD pores during pyroptosis, it promotes non-canonical NLRP3 inflammasome activation by stimulating association of NLRP3 and NEK7. The protein is Nuclear receptor subfamily 4immunitygroup A member 1 (NR4A1) of Homo sapiens (Human).